The sequence spans 394 residues: Elongation factor Tu 2 (394 aa).

The 195-residue stretch at 10–204 folds into the tr-type G domain; that stretch reads KPHVNVGTIG…ALDTYIPEPA (195 aa). The G1 stretch occupies residues 19–26; the sequence is GHVDHGKT. 19–26 is a GTP binding site; that stretch reads GHVDHGKT. T26 lines the Mg(2+) pocket. A G2 region spans residues 60–64; the sequence is GITIN. The interval 81 to 84 is G3; it reads DCPG. GTP is bound by residues 81-85 and 136-139; these read DCPGH and NKCD. The interval 136-139 is G4; it reads NKCD. Positions 174 to 176 are G5; that stretch reads SAL.

It belongs to the TRAFAC class translation factor GTPase superfamily. Classic translation factor GTPase family. EF-Tu/EF-1A subfamily. In terms of assembly, monomer.

Its subcellular location is the cytoplasm. The catalysed reaction is GTP + H2O = GDP + phosphate + H(+). In terms of biological role, GTP hydrolase that promotes the GTP-dependent binding of aminoacyl-tRNA to the A-site of ribosomes during protein biosynthesis. In Shewanella frigidimarina (strain NCIMB 400), this protein is Elongation factor Tu 2.